An 87-amino-acid polypeptide reads, in one-letter code: Non-structural protein NS3 (87 aa).

The protein resides in the host nucleus. Functionally, plays a role in viral DNA replication. In Mustela (ADV), this protein is Non-structural protein NS3.